The sequence spans 245 residues: tRNA pseudouridine synthase A 2 (245 aa).

D53 (nucleophile) is an active-site residue. Y111 is a substrate binding site.

This sequence belongs to the tRNA pseudouridine synthase TruA family. In terms of assembly, homodimer.

The catalysed reaction is uridine(38/39/40) in tRNA = pseudouridine(38/39/40) in tRNA. Functionally, formation of pseudouridine at positions 38, 39 and 40 in the anticodon stem and loop of transfer RNAs. This is tRNA pseudouridine synthase A 2 from Bacillus cereus (strain ATCC 10987 / NRS 248).